A 157-amino-acid polypeptide reads, in one-letter code: Endoribonuclease YbeY (157 aa).

Zn(2+)-binding residues include His-113, His-117, and His-123.

This sequence belongs to the endoribonuclease YbeY family. The cofactor is Zn(2+).

The protein localises to the cytoplasm. Its function is as follows. Single strand-specific metallo-endoribonuclease involved in late-stage 70S ribosome quality control and in maturation of the 3' terminus of the 16S rRNA. This is Endoribonuclease YbeY from Ehrlichia ruminantium (strain Welgevonden).